The primary structure comprises 136 residues: uncharacterized protein (136 aa).

It to E.coli YcgX and YdfO.

This is an uncharacterized protein from Escherichia coli (strain K12).